A 991-amino-acid chain; its full sequence is KAT8 regulatory NSL complex subunit 1-like protein (991 aa).

Lys-136 is covalently cross-linked (Glycyl lysine isopeptide (Lys-Gly) (interchain with G-Cter in SUMO2)). The segment at Val-443 to Met-462 is disordered. Residues Arg-450–Glu-461 are compositionally biased toward basic and acidic residues. Residue Ser-463 is modified to Phosphoserine. Polar residues predominate over residues Ala-749 to Thr-763. The segment at Ala-749–Ser-770 is disordered. The PEHE domain maps to Glu-798–Trp-919. Residue Lys-863 is modified to N6-acetyllysine.

Post-translationally, acetylated on lysine residues by KAT8 upon ionizing radiation-induced DNA damage; deacetylated by HDAC3.

The protein is KAT8 regulatory NSL complex subunit 1-like protein (Kansl1l) of Mus musculus (Mouse).